Consider the following 242-residue polypeptide: GLIPR1-like protein 1 (242 aa).

Positions 1 to 22 (MALKNKFSCLWILGLCLVATTS) are cleaved as a signal peptide. The 133-residue stretch at 39–171 (EAHNEWRGKV…ASTAIFVCNY (133 aa)) folds into the SCP domain. Residue Asn119 is glycosylated (N-linked (GlcNAc...) asparagine). A lipid anchor (GPI-anchor amidated glycine) is attached at Gly221. Residues 222-242 (RAPQQTAFNPFSLGFLLLRIF) constitute a propeptide, removed in mature form.

Belongs to the CRISP family. Part of a oolemmal binding multimeric complex (IZUMO1 complex) composed at least of IZUMO1 and GLIPR1L1; the complex assemblage is influenced by the maturation status of the male germ cell. Interacts with IZUMO1. Post-translationally, N-glycosylated. N-glycosylation decreases during the transit in the caput. Highly expressed in testis.

It localises to the cytoplasmic vesicle. It is found in the secretory vesicle. The protein localises to the acrosome. The protein resides in the cell membrane. Its subcellular location is the membrane raft. It localises to the secreted. Functionally, required for optimal fertilization at the stage of sperm-oocyte fusion, plays a role in optimizing acrosome function, the translocation of IZUMO1 during the acrosome reaction and the fertilization process. Component of epididymosomes, one type of membranous microvesicules which mediate the transfer of lipids and proteins to spermatozoa plasma membrane during epididymal maturation. Also component of the CD9-positive microvesicules found in the cauda region. The protein is GLIPR1-like protein 1 (GLIPR1L1) of Homo sapiens (Human).